A 658-amino-acid polypeptide reads, in one-letter code: tRNA uridine 5-carboxymethylaminomethyl modification enzyme MnmG (658 aa).

FAD is bound at residue 13-18; it reads GAGHAG. Residue 285-299 participates in NAD(+) binding; it reads GPRYCPSVEDKINRF.

Belongs to the MnmG family. As to quaternary structure, homodimer. Heterotetramer of two MnmE and two MnmG subunits. FAD is required as a cofactor.

It localises to the cytoplasm. Functionally, NAD-binding protein involved in the addition of a carboxymethylaminomethyl (cmnm) group at the wobble position (U34) of certain tRNAs, forming tRNA-cmnm(5)s(2)U34. This chain is tRNA uridine 5-carboxymethylaminomethyl modification enzyme MnmG, found in Verminephrobacter eiseniae (strain EF01-2).